We begin with the raw amino-acid sequence, 104 residues long: MQPNDITFFQRFQNDILAGRKTITIRDVSESHFKAGDVLRVGRFEDDGYFCTIEVTGTSTVTLDTLNEKHAQQENMSLDELKRVIAEIYPNQTQFYVIDFKCLR.

The region spanning 6-94 is the ASCH domain; that stretch reads ITFFQRFQND…IAEIYPNQTQ (89 aa). The active-site Proton acceptor is the K21. T24 acts as the Nucleophile in catalysis. E74 serves as the catalytic Proton donor.

It belongs to the N(4)-acetylcytidine amidohydrolase family.

It catalyses the reaction N(4)-acetylcytidine + H2O = cytidine + acetate + H(+). The enzyme catalyses N(4)-acetyl-2'-deoxycytidine + H2O = 2'-deoxycytidine + acetate + H(+). The catalysed reaction is N(4)-acetylcytosine + H2O = cytosine + acetate + H(+). In terms of biological role, catalyzes the hydrolysis of N(4)-acetylcytidine (ac4C). In Salmonella dublin (strain CT_02021853), this protein is N(4)-acetylcytidine amidohydrolase (yqfB).